Here is a 1051-residue protein sequence, read N- to C-terminus: Carbamoyl phosphate synthase large chain (1051 aa).

Residues 1–399 (MKETPKKVLV…SLQKAVRMLD (399 aa)) are carboxyphosphate synthetic domain. The ATP site is built by Arg127, Arg167, Gly173, Gly174, Lys206, Leu208, Glu213, Gly239, Val240, His241, Gln282, and Glu296. The 195-residue stretch at 131–325 (RETMIENNLP…LAYVSAKLAL (195 aa)) folds into the ATP-grasp 1 domain. Gln282, Glu296, and Asn298 together coordinate Mg(2+). Residues Gln282, Glu296, and Asn298 each coordinate Mn(2+). Positions 400–548 (IGEPGVVGGK…LTYNGTEDDL (149 aa)) are oligomerization domain. The tract at residues 549–930 (EFSQGNKLLM…LKSWLSSIPN (382 aa)) is carbamoyl phosphate synthetic domain. The ATP-grasp 2 domain occupies 673–863 (SKLLDKLGIS…LINESMKAIF (191 aa)). ATP is bound by residues Arg709, Lys748, Ile750, Glu755, Gly779, Val780, His781, Ser782, Gln822, and Glu834. Gln822, Glu834, and Asn836 together coordinate Mg(2+). Mn(2+)-binding residues include Gln822, Glu834, and Asn836. An MGS-like domain is found at 930–1051 (NRIPNKNGIA…FEISEYGGGI (122 aa)). Residues 931-1051 (RIPNKNGIAL…FEISEYGGGI (121 aa)) are allosteric domain.

The protein belongs to the CarB family. Composed of two chains; the small (or glutamine) chain promotes the hydrolysis of glutamine to ammonia, which is used by the large (or ammonia) chain to synthesize carbamoyl phosphate. Tetramer of heterodimers (alpha,beta)4. Requires Mg(2+) as cofactor. Mn(2+) serves as cofactor.

The enzyme catalyses hydrogencarbonate + L-glutamine + 2 ATP + H2O = carbamoyl phosphate + L-glutamate + 2 ADP + phosphate + 2 H(+). It carries out the reaction hydrogencarbonate + NH4(+) + 2 ATP = carbamoyl phosphate + 2 ADP + phosphate + 2 H(+). It functions in the pathway amino-acid biosynthesis; L-arginine biosynthesis; carbamoyl phosphate from bicarbonate: step 1/1. It participates in pyrimidine metabolism; UMP biosynthesis via de novo pathway; (S)-dihydroorotate from bicarbonate: step 1/3. Its function is as follows. Large subunit of the glutamine-dependent carbamoyl phosphate synthetase (CPSase). CPSase catalyzes the formation of carbamoyl phosphate from the ammonia moiety of glutamine, carbonate, and phosphate donated by ATP, constituting the first step of 2 biosynthetic pathways, one leading to arginine and/or urea and the other to pyrimidine nucleotides. The large subunit (synthetase) binds the substrates ammonia (free or transferred from glutamine from the small subunit), hydrogencarbonate and ATP and carries out an ATP-coupled ligase reaction, activating hydrogencarbonate by forming carboxy phosphate which reacts with ammonia to form carbamoyl phosphate. The protein is Carbamoyl phosphate synthase large chain of Saccharolobus islandicus (strain M.16.4 / Kamchatka #3) (Sulfolobus islandicus).